Reading from the N-terminus, the 432-residue chain is Glutamyl-tRNA reductase (432 aa).

Residues 49–52 (TCNR), serine 107, 112–114 (ETQ), and glutamine 118 each bind substrate. The active-site Nucleophile is cysteine 50. NADP(+) is bound at residue 186–191 (GAGEMG).

The protein belongs to the glutamyl-tRNA reductase family. Homodimer.

It catalyses the reaction (S)-4-amino-5-oxopentanoate + tRNA(Glu) + NADP(+) = L-glutamyl-tRNA(Glu) + NADPH + H(+). It functions in the pathway porphyrin-containing compound metabolism; protoporphyrin-IX biosynthesis; 5-aminolevulinate from L-glutamyl-tRNA(Glu): step 1/2. Its function is as follows. Catalyzes the NADPH-dependent reduction of glutamyl-tRNA(Glu) to glutamate 1-semialdehyde (GSA). In Campylobacter jejuni subsp. jejuni serotype O:6 (strain 81116 / NCTC 11828), this protein is Glutamyl-tRNA reductase.